The chain runs to 138 residues: Large ribosomal subunit protein eL27 (138 aa).

Belongs to the eukaryotic ribosomal protein eL27 family.

This Solanum tuberosum (Potato) protein is Large ribosomal subunit protein eL27 (RPL27).